The chain runs to 666 residues: MFMYPEFARKALSKLISKKLNIEKVSSKHQLVLLDYGLHGLLPKSLYLEAINSDILNVRFFPPEIINVTDIVKALQNSCRVDEYLKSVSLYHKNSLMVSGPNVVKLMIEYNLLTHSDLEWLINENVVKATYLLKINAYMINFKIDLTVDEIIDLVKDIPVGATLHLYNILNNIDLDIVLRISDEYNIPPVHDILSKLTDEEMCIKLVTKYPMDNVINFINQDVRYSPTFIKTIKDFVNEHLPTMYDGLNDYLHSVIIDEDLIEEYKIKSVAMFNLEYKTDVNTLTLDEQIFVEVNISYYDFRYRQFADEFRDYIMIKERRQITMQSGDRIRRFRRPMSLRSTIIKKDTDSLEDILAHIDNARKNSKVSIEDVERIISSFRLNPCVVRRTMLSDIDIKTKIMVLKIVKDWKSCALTLSAIKGIMVTDTINTVLSKILHHHRNVFKYLTSVENKEIAVCNCSRCLSLFYRELKSVRCDLHTDDGLLDRLYDLTRYALHGKINQNLIGQRCWGPLTEMLFNENKKKKLNNLMEYIKISDMLVYGHSIEKTLIPITDSLSFKLSVDTMSVLNDQYAKVVIFFNTIIEYIIATIYYRLTVLNNYTNVKHFVSKVLHTVMEACGVLFSYIKVNDKIEHELEEMVDKGTVPSYLYHLSINVISIILDDINGTR.

Residues 574–596 (VVIFFNTIIEYIIATIYYRLTVL) traverse the membrane as a helical segment.

This sequence belongs to the orthopoxvirus OPG074 family.

The protein localises to the membrane. This is Protein OPG074 (OPG074) from Vaccinia virus (strain Western Reserve) (VACV).